The sequence spans 197 residues: MIIGLTGGIGSGKSAAADFFIDLGISVLDADQVAKEALSTNSPGYTDFISQFGEVYLNNNREVDRLKLRELIFSNPSKKKDLENIIHPIVRSAISNFIITSTSPYSIVMVPLIFETNSYKNYDKIITVDCDLELQIVRASSRDAQNKSQIKNIINKQASREERLSISDDVLINNSTLSDLKKQVNVLHTKYMELLNE.

The DPCK domain maps to 2–197 (IIGLTGGIGS…HTKYMELLNE (196 aa)). ATP is bound at residue 10-15 (GSGKSA).

The protein belongs to the CoaE family.

The protein localises to the cytoplasm. It catalyses the reaction 3'-dephospho-CoA + ATP = ADP + CoA + H(+). It participates in cofactor biosynthesis; coenzyme A biosynthesis; CoA from (R)-pantothenate: step 5/5. Its function is as follows. Catalyzes the phosphorylation of the 3'-hydroxyl group of dephosphocoenzyme A to form coenzyme A. This Gamma-proteobacterium EBAC31A08 protein is Dephospho-CoA kinase.